A 422-amino-acid polypeptide reads, in one-letter code: Glucose-1-phosphate adenylyltransferase (422 aa).

Alpha-D-glucose 1-phosphate is bound by residues Tyr-110, Gly-175, 190–191, and Ser-208; that span reads EK.

The protein belongs to the bacterial/plant glucose-1-phosphate adenylyltransferase family. Homotetramer.

The catalysed reaction is alpha-D-glucose 1-phosphate + ATP + H(+) = ADP-alpha-D-glucose + diphosphate. It participates in glycan biosynthesis; glycogen biosynthesis. In terms of biological role, involved in the biosynthesis of ADP-glucose, a building block required for the elongation reactions to produce glycogen. Catalyzes the reaction between ATP and alpha-D-glucose 1-phosphate (G1P) to produce pyrophosphate and ADP-Glc. This chain is Glucose-1-phosphate adenylyltransferase, found in Hydrogenovibrio crunogenus (strain DSM 25203 / XCL-2) (Thiomicrospira crunogena).